The sequence spans 399 residues: ATP phosphoribosyltransferase regulatory subunit (399 aa).

Belongs to the class-II aminoacyl-tRNA synthetase family. HisZ subfamily. In terms of assembly, heteromultimer composed of HisG and HisZ subunits.

Its subcellular location is the cytoplasm. The protein operates within amino-acid biosynthesis; L-histidine biosynthesis; L-histidine from 5-phospho-alpha-D-ribose 1-diphosphate: step 1/9. Required for the first step of histidine biosynthesis. May allow the feedback regulation of ATP phosphoribosyltransferase activity by histidine. The polypeptide is ATP phosphoribosyltransferase regulatory subunit (Symbiobacterium thermophilum (strain DSM 24528 / JCM 14929 / IAM 14863 / T)).